Reading from the N-terminus, the 432-residue chain is Trigger factor (432 aa).

Positions 161–246 (EDRVTIDFTG…LKKVEERELP (86 aa)) constitute a PPIase FKBP-type domain.

The protein belongs to the FKBP-type PPIase family. Tig subfamily. Homodimer and monomer. In vivo most of the ribosomes are in complex with monomeric TF. Uncomplexed TF, however, is in a monomer-dimer equilibrium with approximately two thirds of TF existing in a dimeric state.

It is found in the cytoplasm. The enzyme catalyses [protein]-peptidylproline (omega=180) = [protein]-peptidylproline (omega=0). Functionally, involved in protein export. Acts as a chaperone by maintaining the newly synthesized protein in an open conformation. Functions as a peptidyl-prolyl cis-trans isomerase. This chain is Trigger factor, found in Shigella dysenteriae serotype 1 (strain Sd197).